The chain runs to 176 residues: Large ribosomal subunit protein eL6 (176 aa).

The tract at residues 1–27 (MSQVAPKWYQSEDVPAPKQTRKTARPQ) is disordered.

The protein belongs to the eukaryotic ribosomal protein eL6 family. In terms of assembly, component of the large ribosomal subunit. Mature ribosomes consist of a small (40S) and a large (60S) subunit. The 40S subunit contains about 32 different proteins and 1 molecule of RNA (18S). The 60S subunit contains 45 different proteins and 3 molecules of RNA (25S, 5.8S and 5S).

Its subcellular location is the cytoplasm. Component of the ribosome, a large ribonucleoprotein complex responsible for the synthesis of proteins in the cell. The small ribosomal subunit (SSU) binds messenger RNAs (mRNAs) and translates the encoded message by selecting cognate aminoacyl-transfer RNA (tRNA) molecules. The large subunit (LSU) contains the ribosomal catalytic site termed the peptidyl transferase center (PTC), which catalyzes the formation of peptide bonds, thereby polymerizing the amino acids delivered by tRNAs into a polypeptide chain. The nascent polypeptides leave the ribosome through a tunnel in the LSU and interact with protein factors that function in enzymatic processing, targeting, and the membrane insertion of nascent chains at the exit of the ribosomal tunnel. This is Large ribosomal subunit protein eL6 from Candida albicans (strain SC5314 / ATCC MYA-2876) (Yeast).